The sequence spans 483 residues: Rhamnulokinase (483 aa).

11-15 contacts ATP; it reads ASSGR. Residues G79 and 234–236 each bind substrate; that span reads HDT. Catalysis depends on D235, which acts as the Proton acceptor. T257 contributes to the ATP binding site. A substrate-binding site is contributed by N294. Residue Q302 coordinates ATP. A disulfide bond links C352 and C369. G401 is a binding site for ATP.

This sequence belongs to the rhamnulokinase family. Mg(2+) is required as a cofactor.

It carries out the reaction L-rhamnulose + ATP = L-rhamnulose 1-phosphate + ADP + H(+). It participates in carbohydrate degradation; L-rhamnose degradation; glycerone phosphate from L-rhamnose: step 2/3. Its function is as follows. Involved in the catabolism of L-rhamnose (6-deoxy-L-mannose). Catalyzes the transfer of the gamma-phosphate group from ATP to the 1-hydroxyl group of L-rhamnulose to yield L-rhamnulose 1-phosphate. The polypeptide is Rhamnulokinase (Listeria monocytogenes serotype 4b (strain CLIP80459)).